Reading from the N-terminus, the 920-residue chain is DNA ligase (920 aa).

Residues 90–94 (DAAYD), 139–140 (SL), and Glu173 each bind NAD(+). Lys175 functions as the N6-AMP-lysine intermediate in the catalytic mechanism. Positions 196, 235, 360, and 384 each coordinate NAD(+). Zn(2+) contacts are provided by Cys481, Cys484, Cys500, and Cys506. The segment at 662-691 (GEAAIESAETQGDTASETTGAPTGAEAPLG) is disordered. Residues 669–682 (AETQGDTASETTGA) are compositionally biased toward polar residues. The region spanning 839-920 (SLPQTLAGKT…FAQLLATGTI (82 aa)) is the BRCT domain.

It belongs to the NAD-dependent DNA ligase family. LigA subfamily. The cofactor is Mg(2+). Requires Mn(2+) as cofactor.

It carries out the reaction NAD(+) + (deoxyribonucleotide)n-3'-hydroxyl + 5'-phospho-(deoxyribonucleotide)m = (deoxyribonucleotide)n+m + AMP + beta-nicotinamide D-nucleotide.. Its function is as follows. DNA ligase that catalyzes the formation of phosphodiester linkages between 5'-phosphoryl and 3'-hydroxyl groups in double-stranded DNA using NAD as a coenzyme and as the energy source for the reaction. It is essential for DNA replication and repair of damaged DNA. The sequence is that of DNA ligase from Bifidobacterium longum (strain DJO10A).